The sequence spans 180 residues: Cuticle protein 3 (180 aa).

Residues 1 to 16 form the signal peptide; it reads MMKLIVLAAFIGVCAG. The 64-residue stretch at 58 to 121 folds into the Chitin-binding type R&amp;R domain; it reads EQGFRYAYET…PQGAHFPTPP (64 aa).

This Lonomia obliqua (Moth) protein is Cuticle protein 3.